Consider the following 336-residue polypeptide: MKIAIVNDMPMAVEALRRALAFDPSHEVVWVATNGAEAVKYCAELTPDLILMDLIMPVMDGVEATRRIMAESPCAIVIVTVDRQQNVHRVFEAMGHGALDVVDTPALGAGNAQEAAAPLLRKILNIGWLIGQRGSRVRSAPQPLRSGAPRQSLVAIGSSAGGPAALEVLLKGLPKDFAAAIVLVQHVDQVFAAGMAEWLSSASGLEVRLAREGEPPQSGKVLLAGTNHHIRLLKNGTLAYTAEPVNEIYRPSIDVFFESVASFWNGDAVGVLLTGMGRDGAQGLKLMRDQGYLTIAQDQNSSAVYGMPKAAAAIGAASEIRPLDKIAPRLLEIFAK.

The 118-residue stretch at 2–119 folds into the Response regulatory domain; that stretch reads KIAIVNDMPM…GNAQEAAAPL (118 aa). Aspartate 53 is subject to 4-aspartylphosphate. A CheB-type methylesterase domain is found at 143-336; sequence PLRSGAPRQS…APRLLEIFAK (194 aa). Catalysis depends on residues serine 159, histidine 186, and aspartate 279.

It belongs to the CheB family. In terms of processing, phosphorylated by CheA. Phosphorylation of the N-terminal regulatory domain activates the methylesterase activity.

It is found in the cytoplasm. It carries out the reaction [protein]-L-glutamate 5-O-methyl ester + H2O = L-glutamyl-[protein] + methanol + H(+). It catalyses the reaction L-glutaminyl-[protein] + H2O = L-glutamyl-[protein] + NH4(+). Its function is as follows. Involved in chemotaxis. Part of a chemotaxis signal transduction system that modulates chemotaxis in response to various stimuli. Catalyzes the demethylation of specific methylglutamate residues introduced into the chemoreceptors (methyl-accepting chemotaxis proteins or MCP) by CheR. Also mediates the irreversible deamidation of specific glutamine residues to glutamic acid. This Pseudomonas fluorescens (strain ATCC BAA-477 / NRRL B-23932 / Pf-5) protein is Protein-glutamate methylesterase/protein-glutamine glutaminase 1.